Consider the following 267-residue polypeptide: Large ribosomal subunit protein mL57 (267 aa).

Residues 43 to 54 (SSSAVQQEQDAS) are compositionally biased toward low complexity. Residues 43-73 (SSSAVQQEQDASGTSSSQQPRPRWSYTPERM) are disordered.

Belongs to the ribonuclease III family. Mitochondrion-specific ribosomal protein mL57 subfamily. In terms of assembly, component of the mitochondrial large ribosomal subunit (mt-LSU). Mature N.crassa 74S mitochondrial ribosomes consist of a small (37S) and a large (54S) subunit. The 37S small subunit contains a 16S ribosomal RNA (16S mt-rRNA) and 32 different proteins. The 54S large subunit contains a 23S rRNA (23S mt-rRNA) and 42 different proteins. mL57 forms a heterodimer with mL44 and stabilizes rRNA expansion segments 1/2 at a membrane-facing protuberance close to the point of attachment of the ribosome to the translocon in the membrane.

It localises to the mitochondrion. Functionally, component of the mitochondrial ribosome (mitoribosome), a dedicated translation machinery responsible for the synthesis of mitochondrial genome-encoded proteins, including at least some of the essential transmembrane subunits of the mitochondrial respiratory chain. The mitoribosomes are attached to the mitochondrial inner membrane and translation products are cotranslationally integrated into the membrane. This chain is Large ribosomal subunit protein mL57 (mrpl15), found in Neurospora crassa (strain ATCC 24698 / 74-OR23-1A / CBS 708.71 / DSM 1257 / FGSC 987).